The sequence spans 226 residues: Large ribosomal subunit protein uL1 (226 aa).

The protein belongs to the universal ribosomal protein uL1 family. In terms of assembly, part of the 50S ribosomal subunit.

Functionally, binds directly to 23S rRNA. The L1 stalk is quite mobile in the ribosome, and is involved in E site tRNA release. In terms of biological role, protein L1 is also a translational repressor protein, it controls the translation of the L11 operon by binding to its mRNA. This chain is Large ribosomal subunit protein uL1, found in Borrelia garinii subsp. bavariensis (strain ATCC BAA-2496 / DSM 23469 / PBi) (Borreliella bavariensis).